The primary structure comprises 115 residues: Potassium-transporting ATPase potassium-binding subunit (115 aa).

The next 2 helical transmembrane spans lie at 8 to 28 (YFLL…VAFF) and 60 to 80 (SYCT…YGLL).

The protein belongs to the KdpA family. In terms of assembly, the system is composed of three essential subunits: KdpA, KdpB and KdpC.

Its subcellular location is the cell membrane. Its function is as follows. Part of the high-affinity ATP-driven potassium transport (or Kdp) system, which catalyzes the hydrolysis of ATP coupled with the electrogenic transport of potassium into the cytoplasm. This subunit binds the extracellular potassium ions and delivers the ions to the membrane domain of KdpB through an intramembrane tunnel. The chain is Potassium-transporting ATPase potassium-binding subunit from Geobacillus stearothermophilus (Bacillus stearothermophilus).